Consider the following 138-residue polypeptide: Growth factor (138 aa).

The N-terminal stretch at 1 to 19 (MSMKYLMLLFAAMIIRSFA) is a signal peptide. Asparagine 34 carries N-linked (GlcNAc...) asparagine; by host glycosylation. One can recognise an EGF-like domain in the interval 41–81 (AIRLCGPEGDGYCLHGDCIHARDIDGMYCRCSHGYTGIRCQ). 3 cysteine pairs are disulfide-bonded: cysteine 45/cysteine 58, cysteine 53/cysteine 69, and cysteine 71/cysteine 80. N-linked (GlcNAc...) asparagine; by host glycosylation is present at asparagine 95.

Belongs to the orthopoxvirus OPG019 family.

The protein localises to the secreted. In terms of biological role, stimulates cellular proliferation (hyperplasia)and mobility around infected cells to promote rapid and efficient spread of infection. The polypeptide is Growth factor (OPG019) (Rabbitpox virus (strain Utrecht) (RPV)).